We begin with the raw amino-acid sequence, 785 residues long: Tripartite terminase subunit 1 (785 aa).

The C3H1-type zinc finger occupies 197–225; sequence CAVCFEELCVTANQGATIARRLADRICNH. Disordered stretches follow at residues 433–452 and 457–489; these read GGAA…GDRV and GARG…GDIA. 696-703 contacts ATP; sequence FASVYRCG.

The protein belongs to the herpesviridae TRM1 protein family. As to quaternary structure, associates with TRM2 and TRM3 to form the tripartite terminase complex. Interacts with portal protein.

Its subcellular location is the host nucleus. In terms of biological role, component of the molecular motor that translocates viral genomic DNA in empty capsid during DNA packaging. Forms a tripartite terminase complex together with TRM2 and TRM3 in the host cytoplasm. Once the complex reaches the host nucleus, it interacts with the capsid portal vertex. This portal forms a ring in which genomic DNA is translocated into the capsid. TRM1 carries an endonuclease activity that plays an important role for the cleavage of concatemeric viral DNA into unit length genomes. This is Tripartite terminase subunit 1 from Human herpesvirus 1 (strain 17) (HHV-1).